Here is a 181-residue protein sequence, read N- to C-terminus: Ion-translocating oxidoreductase complex subunit B (181 aa).

A hydrophobic region spans residues 1-26; sequence MLEAVSAVMSLGGMALFAGLGLGYAA. The 59-residue stretch at 32-90 folds into the 4Fe-4S domain; it reads EADPVVEKLEALLPATNCGMCGHPGCGPYAQAITEGEAINLCTPGGKAVMESIAAMLGV. Cys-49, Cys-52, Cys-57, Cys-73, Cys-110, Cys-113, Cys-116, Cys-120, Cys-140, Cys-143, Cys-146, and Cys-150 together coordinate [4Fe-4S] cluster. 2 consecutive 4Fe-4S ferredoxin-type domains span residues 101-130 and 131-160; these read KVAY…GANK and QSHT…MQPV.

This sequence belongs to the 4Fe4S bacterial-type ferredoxin family. RnfB subfamily. In terms of assembly, the complex is composed of six subunits: RnfA, RnfB, RnfC, RnfD, RnfE and RnfG. The cofactor is [4Fe-4S] cluster.

The protein resides in the cell inner membrane. In terms of biological role, part of a membrane-bound complex that couples electron transfer with translocation of ions across the membrane. The polypeptide is Ion-translocating oxidoreductase complex subunit B (Magnetococcus marinus (strain ATCC BAA-1437 / JCM 17883 / MC-1)).